Consider the following 269-residue polypeptide: Hemin import ATP-binding protein HmuV (269 aa).

Residues 5–242 (LDAEAASFAI…SLIRRVFDIA (238 aa)) form the ABC transporter domain. 37–44 (GPNGAGKS) contributes to the ATP binding site.

It belongs to the ABC transporter superfamily. Heme (hemin) importer (TC 3.A.1.14.5) family. As to quaternary structure, the complex is composed of two ATP-binding proteins (HmuV), two transmembrane proteins (HmuU) and a solute-binding protein (HmuT).

It localises to the cell inner membrane. Functionally, part of the ABC transporter complex HmuTUV involved in hemin import. Responsible for energy coupling to the transport system. The protein is Hemin import ATP-binding protein HmuV of Rhodopseudomonas palustris (strain BisB18).